We begin with the raw amino-acid sequence, 244 residues long: uncharacterized protein (244 aa).

The tract at residues 30–49 is disordered; the sequence is RETNESPKSQNPSEEATTVN. The span at 35–49 shows a compositional bias: polar residues; the sequence is SPKSQNPSEEATTVN. The next 4 membrane-spanning stretches (helical) occupy residues 96 to 116, 128 to 148, 171 to 191, and 194 to 214; these read LWGTCVILSTLFWSYYVLSNS, LLFILIIALDALLTVSLFGLF, GFFINVLSTMVQALVTVTIAF, and FVTIDFPIYVFSSLFLYHPLS. The disordered stretch occupies residues 224 to 244; sequence QLDGSGERKTDSSLVHQNPPN. The span at 235–244 shows a compositional bias: polar residues; sequence SSLVHQNPPN.

The protein localises to the nucleus membrane. This is an uncharacterized protein from Schizosaccharomyces pombe (strain 972 / ATCC 24843) (Fission yeast).